Reading from the N-terminus, the 472-residue chain is Alanine--anticapsin ligase (472 aa).

E109 contacts Mg(2+). ATP contacts are provided by K138 and K178. The ATP-grasp domain maps to R142–C355. L182 is a Mg(2+) binding site. Residues S184–S185, E226–L229, and Q268 each bind ATP. Substrate-binding positions include E273 and H309 to E311. Mg(2+)-binding residues include E311 and E324. R328–G331 contacts substrate.

In terms of assembly, monomer or homodimer. Requires Mg(2+) as cofactor.

It catalyses the reaction L-anticapsin + L-alanine + ATP = bacilysin + ADP + phosphate + H(+). It participates in antibiotic biosynthesis; bacilysin biosynthesis. Part of the bacABCDEFG operon responsible for the biosynthesis of bacilysin, an irreversible inactivator of the glutaminase domain of glucosamine synthetase. Catalyzes the formation of alpha-dipeptides from various L-amino acids in the presence of ATP. In vivo catalyzes the ligation of L-alanine and L-anticapsin (epoxycyclohexanonyl-Ala) to produce the final bacilysin antibiotic (L-Ala-L-4S-cyclohexenonyl-Ala dipeptide). In Bacillus amyloliquefaciens (Bacillus velezensis), this protein is Alanine--anticapsin ligase.